Here is a 216-residue protein sequence, read N- to C-terminus: GTP cyclohydrolase 1 (216 aa).

Zn(2+)-binding residues include Cys-108, His-111, and Cys-179.

The protein belongs to the GTP cyclohydrolase I family. In terms of assembly, toroid-shaped homodecamer, composed of two pentamers of five dimers.

It carries out the reaction GTP + H2O = 7,8-dihydroneopterin 3'-triphosphate + formate + H(+). The protein operates within cofactor biosynthesis; 7,8-dihydroneopterin triphosphate biosynthesis; 7,8-dihydroneopterin triphosphate from GTP: step 1/1. The protein is GTP cyclohydrolase 1 of Shewanella oneidensis (strain ATCC 700550 / JCM 31522 / CIP 106686 / LMG 19005 / NCIMB 14063 / MR-1).